Reading from the N-terminus, the 189-residue chain is ATP synthase subunit b (189 aa).

Residues 35-54 form a helical membrane-spanning segment; the sequence is LLAQMFNFLVLLILLRAVAY.

This sequence belongs to the ATPase B chain family. F-type ATPases have 2 components, F(1) - the catalytic core - and F(0) - the membrane proton channel. F(1) has five subunits: alpha(3), beta(3), gamma(1), delta(1), epsilon(1). F(0) has three main subunits: a(1), b(2) and c(10-14). The alpha and beta chains form an alternating ring which encloses part of the gamma chain. F(1) is attached to F(0) by a central stalk formed by the gamma and epsilon chains, while a peripheral stalk is formed by the delta and b chains.

The protein resides in the cell membrane. F(1)F(0) ATP synthase produces ATP from ADP in the presence of a proton or sodium gradient. F-type ATPases consist of two structural domains, F(1) containing the extramembraneous catalytic core and F(0) containing the membrane proton channel, linked together by a central stalk and a peripheral stalk. During catalysis, ATP synthesis in the catalytic domain of F(1) is coupled via a rotary mechanism of the central stalk subunits to proton translocation. Its function is as follows. Component of the F(0) channel, it forms part of the peripheral stalk, linking F(1) to F(0). The protein is ATP synthase subunit b of Desulforamulus reducens (strain ATCC BAA-1160 / DSM 100696 / MI-1) (Desulfotomaculum reducens).